The chain runs to 127 residues: Large ribosomal subunit protein bL17 (127 aa).

Belongs to the bacterial ribosomal protein bL17 family. As to quaternary structure, part of the 50S ribosomal subunit. Contacts protein L32.

This is Large ribosomal subunit protein bL17 from Leuconostoc mesenteroides subsp. mesenteroides (strain ATCC 8293 / DSM 20343 / BCRC 11652 / CCM 1803 / JCM 6124 / NCDO 523 / NBRC 100496 / NCIMB 8023 / NCTC 12954 / NRRL B-1118 / 37Y).